The sequence spans 1303 residues: Latent-transforming growth factor beta-binding protein 3 (1303 aa).

An N-terminal signal peptide occupies residues 1–43 (MPGPRGAAGGLAPEMRGAGAAGLLALLLLLLLLLLGLGGRVEG). A glycan (N-linked (GlcNAc...) asparagine) is linked at Asn-89. Residues 109-141 (RVVVCPLPCMNGGQCSSRNQCLCPPDFTGRFCQ) enclose the EGF-like 1 domain. Intrachain disulfides connect Cys-113–Cys-123, Cys-117–Cys-129, Cys-131–Cys-140, Cys-279–Cys-303, Cys-289–Cys-316, and Cys-304–Cys-319. The disordered stretch occupies residues 247–282 (SSNAESAAPSQHLLPHPKPSHPRPPTQKPLGRCFQD). One can recognise a TB 1 domain in the interval 277–331 (GRCFQDTLPKQPCGSNPLPGLTKQEDCCGSIGTAWGQSKCHKCPQLQYTGVQKPG). An N-linked (GlcNAc...) asparagine glycan is attached at Asn-349. In terms of domain architecture, EGF-like 2; calcium-binding spans 355 to 395 (DINECAMPGVCRHGDCLNNPGSYRCVCPPGHSLGPSRTQCI). 7 cysteine pairs are disulfide-bonded: Cys-359–Cys-370, Cys-365–Cys-379, Cys-381–Cys-394, Cys-405–Cys-428, Cys-415–Cys-440, Cys-429–Cys-443, and Cys-430–Cys-455. Positions 403–455 (SLCFRLVSPEHQCQHPLTTRLTRQLCCCSVGKAWGARCQRCPTDGTAAFKEIC) constitute a TB 2 domain. Positions 478 to 552 (FSLFLHPDGP…ISRPSPPTMR (75 aa)) are disordered. A compositionally biased stretch (low complexity) spans 529 to 540 (PTATTTPARPYP). The EGF-like 3 domain maps to 574–615 (ETDECRLNQNICGHGECVPGPPDYSCHCNPGYRSHPQHRYCV). 37 cysteine pairs are disulfide-bonded: Cys-578-Cys-590, Cys-585-Cys-599, Cys-601-Cys-614, Cys-620-Cys-632, Cys-625-Cys-641, Cys-664-Cys-676, Cys-670-Cys-685, Cys-687-Cys-701, Cys-748-Cys-759, Cys-754-Cys-768, Cys-770-Cys-783, Cys-789-Cys-800, Cys-795-Cys-809, Cys-811-Cys-824, Cys-830-Cys-841, Cys-836-Cys-850, Cys-852-Cys-864, Cys-870-Cys-883, Cys-877-Cys-892, Cys-894-Cys-907, Cys-919-Cys-942, Cys-929-Cys-954, Cys-943-Cys-959, Cys-944-Cys-971, Cys-997-Cys-1010, Cys-1005-Cys-1019, Cys-1021-Cys-1034, Cys-1040-Cys-1051, Cys-1046-Cys-1060, Cys-1062-Cys-1075, Cys-1086-Cys-1097, Cys-1092-Cys-1106, Cys-1108-Cys-1121, Cys-1138-Cys-1162, Cys-1148-Cys-1174, Cys-1163-Cys-1177, and Cys-1164-Cys-1186. An EGF-like 4; calcium-binding domain is found at 616 to 659 (DVNECEAEPCGPGRGICMNTGGSYNCHCNRGYRLHVGAGGRSCV). Positions 660–702 (DLNECAKPHLCGDGGFCINFPGHYKCNCYPGYRLKASRPPVCE) constitute an EGF-like 5; calcium-binding domain. Residues 744–784 (DVNECAEGSPCSPGWCENLPGSFRCTCAQGYAPAPDGRSCL) enclose the EGF-like 6; calcium-binding domain. The 41-residue stretch at 785–825 (DVDECEAGDVCDNGICSNTPGSFQCQCLSGYHLSRDRSHCE) folds into the EGF-like 7; calcium-binding domain. The EGF-like 8; calcium-binding domain maps to 826–865 (DIDECDFPAACIGGDCINTNGSYRCLCPQGHRLVGGRKCQ). Asn-845 carries N-linked (GlcNAc...) asparagine glycosylation. Positions 866-908 (DIDECSQDPSLCLPHGACKNLQGSYVCVCDEGFTPTQDQHGCE) constitute an EGF-like 9; calcium-binding domain. Positions 917–971 (KECYLNFDDTVFCDSVLATNVTQQECCCSLGAGWGDHCEIYPCPVYSSAEFHSLC) constitute a TB 3 domain. The N-linked (GlcNAc...) asparagine glycan is linked to Asn-936. Residues 993-1035 (DIDECMLFGSEICKEGKCVNTQPGYECYCKQGFYYDGNLLECV) enclose the EGF-like 10; calcium-binding domain. An EGF-like 11; calcium-binding domain is found at 1036–1076 (DVDECLDESNCRNGVCENTRGGYRCACTPPAEYSPAQRQCL). One can recognise an EGF-like 12; calcium-binding domain in the interval 1082 to 1122 (DVDECQDPAACRPGRCVNLPGSYRCECRPPWVPGPSGRDCQ). The region spanning 1136–1186 (DVCWSQRGEDGMCAGPLAGPALTFDDCCCRQGRGWGAQCRPCPPRGAGSHC) is the TB 4 domain. Polar residues predominate over residues 1188–1198 (TSQSESNSFWD). Residues 1188–1219 (TSQSESNSFWDTSPLLLGKPPRDEDSSEEDSD) are disordered. The EGF-like 13; calcium-binding domain occupies 1254–1298 (DIDECRELNQRGLLCKSERCVNTSGSFRCVCKAGFARSRPHGACV). Intrachain disulfides connect Cys-1258–Cys-1273 and Cys-1268–Cys-1282. The N-linked (GlcNAc...) asparagine glycan is linked to Asn-1275.

This sequence belongs to the LTBP family. In terms of assembly, forms part of the large latent transforming growth factor beta precursor complex; removal is essential for activation of complex. Interacts with EFEMP2. Contains hydroxylated asparagine residues. In terms of processing, two intrachain disulfide bonds from the TB3 domain are rearranged upon TGFB1 binding, and form interchain bonds with TGFB1 propeptide, anchoring it to the extracellular matrix. Isoform 2: Expressed prominently in heart, skeletal muscle, prostate, testis, small intestine and ovary. Isoform 1: Strongly expressed in pancreas and liver.

It localises to the secreted. The protein localises to the extracellular space. It is found in the extracellular matrix. Its function is as follows. Key regulator of transforming growth factor beta (TGFB1, TGFB2 and TGFB3) that controls TGF-beta activation by maintaining it in a latent state during storage in extracellular space. Associates specifically via disulfide bonds with the Latency-associated peptide (LAP), which is the regulatory chain of TGF-beta, and regulates integrin-dependent activation of TGF-beta. This is Latent-transforming growth factor beta-binding protein 3 (LTBP3) from Homo sapiens (Human).